Consider the following 98-residue polypeptide: Sec-independent protein translocase protein TatA (98 aa).

The helical transmembrane segment at 1–21 threads the bilayer; sequence MGAMSPWHWAIVALVVVILFG. The interval 43-98 is disordered; sequence VKEMQNDNSTPAPTAQSAPPPQSAPAELPVADTTTAPVTPPAPVQPQSQHTEPKSA. Residues 66–79 show a composition bias toward low complexity; it reads APAELPVADTTTAP.

Belongs to the TatA/E family. As to quaternary structure, the Tat system comprises two distinct complexes: a TatABC complex, containing multiple copies of TatA, TatB and TatC subunits, and a separate TatA complex, containing only TatA subunits. Substrates initially bind to the TatABC complex, which probably triggers association of the separate TatA complex to form the active translocon.

The protein localises to the cell membrane. Functionally, part of the twin-arginine translocation (Tat) system that transports large folded proteins containing a characteristic twin-arginine motif in their signal peptide across membranes. TatA could form the protein-conducting channel of the Tat system. The sequence is that of Sec-independent protein translocase protein TatA from Rhodococcus erythropolis (Arthrobacter picolinophilus).